A 263-amino-acid polypeptide reads, in one-letter code: MIYNKNPIPTEGEILIATVKQIFDYGSYVTLDEYGNLQAFLPWSEISSRWVKNIRDVIKEGRKIVVKVIRVDKRKGTIDVSLKKVTEDEKRKKMSQWKKIQKVDKILEIVSQKINKTEKEGWEQVAWKLEDKYGDAYDALVKAVKEGDSILKNAGVPEVWIKPLMEEIGKHIEEKRVKKSEIVTLRSSDPAGIEKIRKVLGAAVEIAENADVDIKIYTIGAPRYRIDIIGTDPKLLSKVMTEILDNIREISKEEKVEFNVVRK.

An S1 motif domain is found at 12–83 (GEILIATVKQ…RKGTIDVSLK (72 aa)).

Belongs to the eIF-2-alpha family. As to quaternary structure, heterotrimer composed of an alpha, a beta and a gamma chain.

EIF-2 functions in the early steps of protein synthesis by forming a ternary complex with GTP and initiator tRNA. The sequence is that of Translation initiation factor 2 subunit alpha from Sulfurisphaera tokodaii (strain DSM 16993 / JCM 10545 / NBRC 100140 / 7) (Sulfolobus tokodaii).